Consider the following 220-residue polypeptide: 7-cyano-7-deazaguanine synthase (220 aa).

10–20 provides a ligand contact to ATP; it reads FSGGQDSTTCL. Zn(2+) contacts are provided by Cys186, Cys195, Cys198, and Cys201.

This sequence belongs to the QueC family. As to quaternary structure, homodimer. Requires Zn(2+) as cofactor.

It catalyses the reaction 7-carboxy-7-deazaguanine + NH4(+) + ATP = 7-cyano-7-deazaguanine + ADP + phosphate + H2O + H(+). It participates in purine metabolism; 7-cyano-7-deazaguanine biosynthesis. In terms of biological role, catalyzes the ATP-dependent conversion of 7-carboxy-7-deazaguanine (CDG) to 7-cyano-7-deazaguanine (preQ(0)). This is 7-cyano-7-deazaguanine synthase from Bacillus cereus (strain G9842).